Consider the following 356-residue polypeptide: DNA polymerase IV (356 aa).

Residues 6–187 form the UmuC domain; that stretch reads IIHIDMDYFF…LDIGDFPGVG (182 aa). Mg(2+) is bound by residues D10 and D105. E106 is an active-site residue.

The protein belongs to the DNA polymerase type-Y family. As to quaternary structure, monomer. Mg(2+) is required as a cofactor.

The protein localises to the cytoplasm. The enzyme catalyses DNA(n) + a 2'-deoxyribonucleoside 5'-triphosphate = DNA(n+1) + diphosphate. Poorly processive, error-prone DNA polymerase involved in untargeted mutagenesis. Copies undamaged DNA at stalled replication forks, which arise in vivo from mismatched or misaligned primer ends. These misaligned primers can be extended by PolIV. Exhibits no 3'-5' exonuclease (proofreading) activity. May be involved in translesional synthesis, in conjunction with the beta clamp from PolIII. This Staphylococcus aureus (strain Mu50 / ATCC 700699) protein is DNA polymerase IV.